The primary structure comprises 173 residues: MVNDNYNTAEGIDSYYLVNSKHKYSITSPSPLDNLLVLYGLEPIAKSLARTNADGSKGVKLRKSYKNHIQDLPGKHQIVGGQKPIPAGLLDPMVAQAPDIIKELDPELLSRGLRFEKTPINGIPGFNTADLAINDQHTLMRGDDMSENDEFGARRSKRKKKAQNGTDSKRQHI.

Residues 139 to 173 are disordered; sequence LMRGDDMSENDEFGARRSKRKKKAQNGTDSKRQHI.

It belongs to the Mediator complex subunit 19 family. Component of the Mediator complex.

The protein resides in the nucleus. Its function is as follows. Component of the Mediator complex, a coactivator involved in the regulated transcription of nearly all RNA polymerase II-dependent genes. Mediator functions as a bridge to convey information from gene-specific regulatory proteins to the basal RNA polymerase II transcription machinery. Mediator is recruited to promoters by direct interactions with regulatory proteins and serves as a scaffold for the assembly of a functional preinitiation complex with RNA polymerase II and the general transcription factors. In Scheffersomyces stipitis (strain ATCC 58785 / CBS 6054 / NBRC 10063 / NRRL Y-11545) (Yeast), this protein is Mediator of RNA polymerase II transcription subunit 19 (ROX3).